Consider the following 498-residue polypeptide: ATP synthase subunit beta, chloroplastic (498 aa).

172 to 179 lines the ATP pocket; the sequence is GGAGVGKT.

This sequence belongs to the ATPase alpha/beta chains family. F-type ATPases have 2 components, CF(1) - the catalytic core - and CF(0) - the membrane proton channel. CF(1) has five subunits: alpha(3), beta(3), gamma(1), delta(1), epsilon(1). CF(0) has four main subunits: a(1), b(1), b'(1) and c(9-12).

It localises to the plastid. Its subcellular location is the chloroplast thylakoid membrane. It carries out the reaction ATP + H2O + 4 H(+)(in) = ADP + phosphate + 5 H(+)(out). Produces ATP from ADP in the presence of a proton gradient across the membrane. The catalytic sites are hosted primarily by the beta subunits. In Illicium oligandrum (Star anise), this protein is ATP synthase subunit beta, chloroplastic.